Consider the following 203-residue polypeptide: Probable cytochrome c oxidase subunit 3 (203 aa).

The next 5 membrane-spanning stretches (helical) occupy residues 30–50 (IVWLSSELMFFAGLFAFYFSA), 71–91 (VPVTLVLIASSFTCQMGVFAA), 96–116 (IFGLRRWYVITFLMGLFFVLG), 143–163 (ATGFHGLHVTGGLIAFIFLLV), and 179–199 (IVVSYYWHFVDIVWIALFTVI).

Belongs to the cytochrome c oxidase subunit 3 family.

It localises to the cell membrane. The enzyme catalyses 4 Fe(II)-[cytochrome c] + O2 + 8 H(+)(in) = 4 Fe(III)-[cytochrome c] + 2 H2O + 4 H(+)(out). In Mycobacterium bovis (strain ATCC BAA-935 / AF2122/97), this protein is Probable cytochrome c oxidase subunit 3 (ctaE).